Reading from the N-terminus, the 136-residue chain is Large ribosomal subunit protein uL16 (136 aa).

This sequence belongs to the universal ribosomal protein uL16 family. Part of the 50S ribosomal subunit.

Its function is as follows. Binds 23S rRNA and is also seen to make contacts with the A and possibly P site tRNAs. The chain is Large ribosomal subunit protein uL16 from Rickettsia felis (strain ATCC VR-1525 / URRWXCal2) (Rickettsia azadi).